A 455-amino-acid polypeptide reads, in one-letter code: Ribosome biogenesis protein NOP53 (455 aa).

A compositionally biased stretch (polar residues) spans 1–15 (MAPTNLTKKPSQYKQ). Residues 1-25 (MAPTNLTKKPSQYKQSSRKGKKAWR) are disordered. The span at 16-25 (SSRKGKKAWR) shows a compositional bias: basic residues. Residue serine 31 is modified to Phosphoserine. Residues 264-333 (HLMETLDDNE…RNKAKRHEEK (70 aa)) form a disordered region. Acidic residues predominate over residues 268–294 (TLDDNEEEESSSNEEEEEEEEENENEN). Over residues 314–328 (VKNKKKTKYQRNKAK) the composition is skewed to basic residues.

It belongs to the NOP53 family. Interacts with CBF5, FPR3, FPR4, NOP2, PIH1, RRN3, RRP6 and PAP2. Interacts with pre-60S ribosomal particles.

It is found in the nucleus. The protein resides in the nucleolus. Its subcellular location is the nucleoplasm. Late-acting factor in the nuclear maturation of 60S ribosomal subunits, which is required for normal acquisition of export competence. Required for the export of the large subunit. Acts to stimulate the RNase activity of the exosome complex, and may recruit the exosome to 7S pre-rRNA for processing. Associates with numerous RNAs including the 27S and 7S pre-rRNAs and the box H/ACA snoRNA snR37. Also interacts (via N-terminal region) with the mature 25S rRNA and the mature 5.8S rRNA. This Saccharomyces cerevisiae (strain ATCC 204508 / S288c) (Baker's yeast) protein is Ribosome biogenesis protein NOP53.